Consider the following 309-residue polypeptide: Carbamate kinase 2 (309 aa).

The protein belongs to the carbamate kinase family.

The protein localises to the cytoplasm. The catalysed reaction is hydrogencarbonate + NH4(+) + ATP = carbamoyl phosphate + ADP + H2O + H(+). The protein operates within metabolic intermediate metabolism; carbamoyl phosphate degradation; CO(2) and NH(3) from carbamoyl phosphate: step 1/1. This chain is Carbamate kinase 2 (arcC2), found in Staphylococcus epidermidis (strain ATCC 12228 / FDA PCI 1200).